A 425-amino-acid polypeptide reads, in one-letter code: G protein-activated inward rectifier potassium channel 2 (425 aa).

At 1–91 (MTMAKLTESM…ILTTLVDLKW (91 aa)) the chain is on the cytoplasmic side. A phosphoserine mark is found at Ser18 and Ser25. The helical transmembrane segment at 92–116 (RFNLLIFVMVYTVTWLFFGMIWWLI) threads the bilayer. At 117 to 140 (AYIRGDMDHVEDPSWTPCVTNLNG) the chain is on the extracellular side. Positions 141 to 152 (FVSAFLFSIETE) form an intramembrane region, helical; Pore-forming. The pore-forming intramembrane region spans 153–159 (TTIGYGY). The Selectivity filter signature appears at 154-159 (TIGYGY). Residues 160-168 (RVITDKCPE) lie on the Extracellular side of the membrane. The chain crosses the membrane as a helical span at residues 169 to 190 (GIILLLIQSVLGSIVNAFMVGC). At 191 to 425 (MFVKISQPKK…VANLENESKV (235 aa)) the chain is on the cytoplasmic side. Residues 392–425 (NQHAELETEEEEKNPEEQTERNGDVANLENESKV) are disordered. The PDZ-binding signature appears at 422 to 425 (ESKV).

It belongs to the inward rectifier-type potassium channel (TC 1.A.2.1) family. KCNJ6 subfamily. Associates with KCNJ3/GIRK1 or KCNJ5/GRIK4 to form a G-protein-activated heteromultimer pore-forming unit. The resulting inward current is much larger. Interacts (via PDZ-binding motif) with SNX27 (via PDZ domain); the interaction is required when endocytosed to prevent degradation in lysosomes and promote recycling to the plasma membrane. As to expression, expressed in insulin-secreting cells and brain.

The protein resides in the membrane. It carries out the reaction K(+)(in) = K(+)(out). Activated by phosphatidylinositol 4,5 biphosphate (PtdIns(4,5)P2). Inward rectifier potassium channels are characterized by a greater tendency to allow potassium to flow into the cell rather than out of it. Their voltage dependence is regulated by the concentration of extracellular potassium; as external potassium is raised, the voltage range of the channel opening shifts to more positive voltages. The inward rectification is mainly due to the blockage of outward current by internal magnesium. This potassium channel may be involved in the regulation of insulin secretion by glucose and/or neurotransmitters acting through G-protein-coupled receptors. This Mesocricetus auratus (Golden hamster) protein is G protein-activated inward rectifier potassium channel 2 (KCNJ6).